The chain runs to 199 residues: Peptidyl-tRNA hydrolase (199 aa).

Y25 contributes to the tRNA binding site. H30 acts as the Proton acceptor in catalysis. The tRNA site is built by Y76, N78, and N124.

It belongs to the PTH family. In terms of assembly, monomer.

The protein localises to the cytoplasm. The enzyme catalyses an N-acyl-L-alpha-aminoacyl-tRNA + H2O = an N-acyl-L-amino acid + a tRNA + H(+). Functionally, hydrolyzes ribosome-free peptidyl-tRNAs (with 1 or more amino acids incorporated), which drop off the ribosome during protein synthesis, or as a result of ribosome stalling. In terms of biological role, catalyzes the release of premature peptidyl moieties from peptidyl-tRNA molecules trapped in stalled 50S ribosomal subunits, and thus maintains levels of free tRNAs and 50S ribosomes. The chain is Peptidyl-tRNA hydrolase from Mycobacterium leprae (strain Br4923).